Here is a 305-residue protein sequence, read N- to C-terminus: GTPase Era (305 aa).

In terms of domain architecture, Era-type G spans 11–181 (RSGFVSFVGR…IKVMTDLLPE (171 aa)). The tract at residues 19 to 26 (GRPNTGKS) is G1. Residue 19 to 26 (GRPNTGKS) participates in GTP binding. The interval 45–49 (ETTRH) is G2. The segment at 66–69 (DTPG) is G3. GTP-binding positions include 66 to 70 (DTPGL) and 130 to 133 (TKAD). The segment at 130–133 (TKAD) is G4. Positions 160-162 (VSS) are G5. The 80-residue stretch at 212–291 (LKNELPHSVA…FLDLRIKVLK (80 aa)) folds into the KH type-2 domain.

The protein belongs to the TRAFAC class TrmE-Era-EngA-EngB-Septin-like GTPase superfamily. Era GTPase family. In terms of assembly, monomer.

The protein resides in the cytoplasm. It localises to the cell membrane. Functionally, an essential GTPase that binds both GDP and GTP, with rapid nucleotide exchange. Plays a role in 16S rRNA processing and 30S ribosomal subunit biogenesis and possibly also in cell cycle regulation and energy metabolism. This Corynebacterium glutamicum (strain ATCC 13032 / DSM 20300 / JCM 1318 / BCRC 11384 / CCUG 27702 / LMG 3730 / NBRC 12168 / NCIMB 10025 / NRRL B-2784 / 534) protein is GTPase Era.